The following is a 192-amino-acid chain: MPSLLLASSSPYRRELLARLRLPFACESPDIDESHRPGETPHDLVQRLAREKAEALASEYPGHLIIGSDQVAVLDGQILGKPHTFERAREQLTAASDTRVTFLTGLALLNSSTGECQVDCVPFTVHMRELDQASIERYLRAETPYDCAGSFKAEGLGVSLFRSTQGADATSLIGLPLIRLVDMLIKEGVSVP.

The active-site Proton acceptor is D69.

It belongs to the Maf family. YceF subfamily. A divalent metal cation is required as a cofactor.

Its subcellular location is the cytoplasm. The enzyme catalyses N(7)-methyl-GTP + H2O = N(7)-methyl-GMP + diphosphate + H(+). Its function is as follows. Nucleoside triphosphate pyrophosphatase that hydrolyzes 7-methyl-GTP (m(7)GTP). May have a dual role in cell division arrest and in preventing the incorporation of modified nucleotides into cellular nucleic acids. This Pseudomonas syringae pv. tomato (strain ATCC BAA-871 / DC3000) protein is 7-methyl-GTP pyrophosphatase (maf-1).